We begin with the raw amino-acid sequence, 1135 residues long: Envelopment polyprotein (1135 aa).

A signal peptide spans 1–18 (MGIWKWLVMASLVWPVLT). Residues 19-485 (LRNVYDMKIE…VPGFHGWATA (467 aa)) are Lumenal-facing. Intrachain disulfides connect cysteine 29/cysteine 151, cysteine 63/cysteine 157, cysteine 109/cysteine 128, cysteine 133/cysteine 138, cysteine 175/cysteine 185, cysteine 210/cysteine 247, cysteine 234/cysteine 351, cysteine 376/cysteine 435, cysteine 380/cysteine 389, cysteine 405/cysteine 424, and cysteine 452/cysteine 475. Asparagine 134 carries N-linked (GlcNAc...) asparagine; by host glycosylation. Asparagine 235 and asparagine 347 each carry an N-linked (GlcNAc...) asparagine; by host glycan. An N-linked (GlcNAc...) asparagine; by host glycan is attached at asparagine 399. The chain crosses the membrane as a helical span at residues 486–506 (ALLVTFCFGWVLIPAITFIIL). At 507–627 (TILKFIANIF…LNLFRYKSRC (121 aa)) the chain is on the cytoplasmic side. Positions 516-533 (FHTSNQENRLKSVLRKIK) are binding to the ribonucleoprotein. 2 consecutive CCHC-type zinc fingers follow at residues 545–565 (CDVCKYECETYKELKAHGVSC) and 570–591 (CPYCFTHCEPTEAAFQAHYKVC). 3 binding to the ribonucleoprotein regions span residues 588-605 (YKVCQVTHRFRDDLKKTV), 592-603 (QVTHRFRDDLKK), and 611-625 (TPGCYRTLNLFRYKS). Positions 611–634 (TPGCYRTLNLFRYKSRCYIFTMWI) constitute an ITAM domain. A YxxL motif is present at residues 615-618 (YRTL). A helical transmembrane segment spans residues 628–648 (YIFTMWIFLLVLESILWAASA). Over 649-1105 (SETPLTPVWN…EWISGIFSGN (457 aa)) the chain is Lumenal. 8 disulfides stabilise this stretch: cysteine 735/cysteine 770, cysteine 739/cysteine 777, cysteine 751/cysteine 885, cysteine 765/cysteine 896, cysteine 780/cysteine 904, cysteine 806/cysteine 815, cysteine 823/cysteine 832, and cysteine 863/cysteine 867. Residues 757-777 (YQYETSWGCNPSDCPGVGTGC) are fusion loop. Asparagine 928 is a glycosylation site (N-linked (GlcNAc...) asparagine; by host). 5 cysteine pairs are disulfide-bonded: cysteine 970–cysteine 1000, cysteine 993–cysteine 1045, cysteine 1010–cysteine 1015, cysteine 1046–cysteine 1051, and cysteine 1085–cysteine 1089. Residues 1106 to 1126 (WIVLIVLCVFLLFSLVLLSIL) traverse the membrane as a helical segment. The tract at residues 1122-1135 (LLSILCPVRKHKKS) is binding to the ribonucleoprotein. Over 1127–1135 (CPVRKHKKS) the chain is Cytoplasmic.

It belongs to the hantavirus envelope glycoprotein family. Homodimer. Homotetramer; forms heterotetrameric Gn-Gc spikes in the pre-fusion conformation. Interacts (via C-terminus) with the nucleoprotein. Interacts with host TUFM; this interaction contributes to the virus-induced degradation of mitochondria by autophagy, which leads to degradation of host MAVS and inhibition of type I interferon (IFN) responses. Interacts with host MAP1LC3B; this interaction contributes to the virus-induced degradation of mitochondria by autophagy, which leads to degradation of host MAVS and inhibition of type I interferon (IFN) responses. In terms of assembly, homodimer. Homotetramer; forms heterotetrameric Gn-Gc spikes in the pre-fusion conformation. Homotrimer; forms homotrimer in the post-fusion conformation at acidic pH. Interacts (via C-terminus) with the nucleoprotein. Post-translationally, envelope polyprotein precursor is quickly cleaved in vivo just after synthesis, presumably by host signal peptidase.

It is found in the virion membrane. The protein localises to the host cell surface. It localises to the host Golgi apparatus membrane. The protein resides in the host endoplasmic reticulum membrane. Its subcellular location is the host mitochondrion. In terms of biological role, forms homotetramers with glycoprotein C at the surface of the virion. Attaches the virion to host cell receptors including integrin ITGAV/ITGB3. This attachment induces virion internalization predominantly through clathrin-dependent endocytosis. May also bind to host C1QBP for virus entry into the host cell. Mediates the assembly and budding of infectious virus particles through its interaction with the nucleocapsid protein and the viral genome. May dysregulate normal immune and endothelial cell responses through an ITAM motif. Translocates to mitochondria, binds to host TUFM and recruits MAP1LC3B. These interactions induce mitochondrial autophagy and therefore destruction of host MAVS leading to inhibition of type I interferon (IFN) responses. Concomitant breakdown of glycoprotein N is apparently prevented by the nucleoprotein that may inhibit Gn-stimulated autophagosome-lysosome fusion. Interacts with the viral genomic RNA. Forms homotetramers with glycoprotein N at the surface of the virion. Attaches the virion to host cell receptors including integrin ITGAV/ITGB3. This attachment induces virion internalization predominantly through clathrin-dependent endocytosis. May also bind to host C1QBP for virus entry into the host cell. Class II fusion protein that promotes fusion of viral membrane with host endosomal membrane after endocytosis of the virion. This chain is Envelopment polyprotein (GP), found in Hantaan virus (strain Lee) (Lee virus).